The following is a 242-amino-acid chain: Type III pantothenate kinase (242 aa).

7–14 (DLGNSRFK) contacts ATP. Residues Tyr91 and 98–101 (GVDR) contribute to the substrate site. Residue Asp100 is the Proton acceptor of the active site. Thr121 contacts ATP. Thr171 contributes to the substrate binding site.

The protein belongs to the type III pantothenate kinase family. As to quaternary structure, homodimer. The cofactor is NH4(+). K(+) serves as cofactor.

Its subcellular location is the cytoplasm. The enzyme catalyses (R)-pantothenate + ATP = (R)-4'-phosphopantothenate + ADP + H(+). The protein operates within cofactor biosynthesis; coenzyme A biosynthesis; CoA from (R)-pantothenate: step 1/5. Catalyzes the phosphorylation of pantothenate (Pan), the first step in CoA biosynthesis. In Xanthomonas oryzae pv. oryzae (strain MAFF 311018), this protein is Type III pantothenate kinase.